Consider the following 913-residue polypeptide: Calcium-activated chloride channel regulator 1 (913 aa).

Residues 1-21 (MESLKSPVFLLILHLLEGVLS) form the signal peptide. The interval 46 to 199 (DEALIQHIKD…AITGKNQVRR (154 aa)) is metalloprotease domain. His156 serves as a coordination point for Zn(2+). The active site involves Glu157. His160 and Asn167 together coordinate Zn(2+). Residues 307–476 (IVCLVLDKSG…NGLVDAFAAL (170 aa)) form the VWFA domain. N-linked (GlcNAc...) asparagine glycosylation is found at Asn504, Asn770, Asn804, Asn810, Asn836, and Asn887.

The protein belongs to the CLCR family. The 110 kDa translation product is autoproteolytically cleaved by the metalloprotease domain in the endoplasmic reticulum into a 75 kDa N-terminal and a 35 kDa C-terminal products that remain physically associated with each other. The cleavage is necessary for calcium-activated chloride channel (CaCC) activation activity. Post-translationally, glycosylated. As to expression, exclusively expressed in the digestive and respiratory tracts and in the uterus (at protein level). Expressed in small intestine, colon, stomach, and uterus and slightly expressed in trachea tissue. Exclusively expressed in the mucin granule membranes of gastrointestinal, respiratory, and uterine goblet cells and other mucin-producing cells. In the colon, expressed in the surface mucous cells. In the stomach highly expressed in the surface epithelium in the pylorus. Strongly expressed in the airway epithelium of lung tissues associated with airway hyperresponsiveness (AHR).

Its subcellular location is the secreted. It localises to the extracellular space. May be involved in mediating calcium-activated chloride conductance. May play critical roles in goblet cell metaplasia, mucus hypersecretion, cystic fibrosis and AHR. May be involved in the regulation of mucus production and/or secretion by goblet cells. Involved in the regulation of tissue inflammation in the innate immune response. May play a role as a tumor suppressor. Induces MUC5AC. The protein is Calcium-activated chloride channel regulator 1 (Clca1) of Mus musculus (Mouse).